A 1292-amino-acid polypeptide reads, in one-letter code: Sorbin and SH3 domain-containing protein 1 (1292 aa).

Disordered regions lie at residues 1–29, 73–158, 214–275, and 318–381; these read MSSE…ATAD, LRAS…AQPE, HLQR…SSPL, and REQQ…MDEV. The segment covering 74–89 has biased composition (low complexity); it reads RASSSYRETPSSSPAS. Residue Thr-82 is modified to Phosphothreonine. 2 positions are modified to phosphoserine: Ser-86 and Ser-89. Positions 93 to 102 are enriched in basic and acidic residues; that stretch reads TRQHESKPGL. Glu-105, Leu-114, Val-137, Ser-146, Ser-242, and Ser-259 each carry phosphoserine. Polar residues predominate over residues 114-128; that stretch reads LSSSADANGNAQPSS. Pro residues predominate over residues 240-252; that stretch reads SFSPPPPLVPPAP. The span at 266–275 shows a compositional bias: polar residues; sequence AVSSTDSSPL. Ser-341 carries the post-translational modification Phosphoserine. Thr-344 is modified (phosphothreonine). Residues Glu-346 and Ser-350 each carry the phosphoserine modification. Basic and acidic residues predominate over residues 354 to 365; sequence AIEKRAKDDSRR. The 104-residue stretch at 366 to 469 folds into the SoHo domain; the sequence is VVKSTQDLSD…YSPRYSFSED (104 aa). Ser-369, Ser-374, and Asn-387 each carry phosphoserine. The tract at residues 405 to 534 is disordered; it reads LNRDTPEENP…TRKYRAEPKS (130 aa). Over residues 437–450 the composition is skewed to polar residues; the sequence is YTPTYQFPASTPSP. Phosphoserine is present on residues Ser-452, Ser-465, Asp-469, Ser-472, Arg-478, and Ser-481. Residues 510-534 show a composition bias toward basic and acidic residues; that stretch reads SSERNDWEPPDKKVDTRKYRAEPKS. Tyr-536 carries the phosphotyrosine; by ABL1 modification. 4 positions are modified to phosphoserine: Ser-556, Asn-603, Ser-609, and Ser-640. The segment at 628–650 is disordered; that stretch reads APSANVPQSSAISPTPEISSETP. Tyr-654 is modified (phosphotyrosine; by ABL1). Phosphoserine is present on residues Ser-665 and Lys-700. Residues 692–716 form a disordered region; the sequence is PLQGLSGLKRPSSSASTKDSESPRH. Residue Thr-708 is modified to Phosphothreonine. Residues Ser-713, Ile-730, Asp-735, and Ile-765 each carry the phosphoserine modification. Positions 793–852 constitute an SH3 1 domain; sequence SEMRPARAKFDFKAQTLKELPLQKGDIVYIYKQIDQNWYEGEHHGRVGIFPRTYIELLPP. A Phosphothreonine modification is found at Thr-862. In terms of domain architecture, SH3 2 spans 867-928; it reads LEYGEAIAKF…PITYVDVIKR (62 aa). Position 923 is a phosphoserine (Val-923). Tyr-937 carries the post-translational modification Phosphotyrosine. The segment covering 944–954 has biased composition (low complexity); the sequence is SSPSRSATASP. Disordered stretches follow at residues 944–976, 1041–1064, 1106–1150, and 1162–1230; these read SSPS…SRRA, SDRP…TYSL, QLSD…KKSC, and TEQR…SQTS. Phosphoserine occurs at positions 945 and 953. Polar residues predominate over residues 955–971; it reads QFSSHSKLITPAPSSLP. The span at 1106-1117 shows a compositional bias: polar residues; the sequence is QLSDAFSSQSKR. The span at 1119 to 1136 shows a compositional bias: basic and acidic residues; it reads PWREESGQYERKAERGAG. Polar residues predominate over residues 1162–1172; sequence TEQRLSDLNTP. Over residues 1192–1203 the composition is skewed to basic and acidic residues; sequence QTERHRGGEQAG. Residues 1211–1230 show a composition bias toward polar residues; sequence GSQQPQAQQRRVTPDRSQTS. Phosphoserine is present on Gln-1213. One can recognise an SH3 3 domain in the interval 1231-1292; the sequence is QDLFSYQALY…PGNYVKPLYL (62 aa). Phosphotyrosine; by ABL1 is present on Tyr-1240.

Interacts (via third SH3 domain) with the Ten-1 ICD form of TENM1; the interaction induces the translocation of SORBS1 to the nucleus. Interacts with INSM1. Interacts with the long isoform of AFDN and with VCL. AFDN and VCL bind to SORBS1 in a competitive manner and do not form a ternary complex. Interacts with ABL1, CBL, CBLB and INPPL1/SHIP2 through the third SH3 domain. Interaction with ABL1 occurs only after insulin stimulation while this has no effect on the interaction with INPPL1. Interacts with the insulin receptor but dissociates from it following insulin stimulation. Also interacts with SCA7, PTK2/FAK1 and flotillin. Interacts (via SH3 domain 2) with PXN. Post-translationally, O-glycosylated. Detected in skeletal muscle (at protein level). Widely expressed with highest levels in heart and skeletal muscle.

Its subcellular location is the cell junction. The protein resides in the adherens junction. It localises to the cell membrane. The protein localises to the cytoplasm. It is found in the cytoskeleton. Its subcellular location is the focal adhesion. The protein resides in the nucleus. It localises to the nucleus matrix. Plays a role in tyrosine phosphorylation of CBL by linking CBL to the insulin receptor. Required for insulin-stimulated glucose transport. Involved in formation of actin stress fibers and focal adhesions. This chain is Sorbin and SH3 domain-containing protein 1, found in Homo sapiens (Human).